A 91-amino-acid polypeptide reads, in one-letter code: Small ribosomal subunit protein uS17 (91 aa).

Belongs to the universal ribosomal protein uS17 family. In terms of assembly, part of the 30S ribosomal subunit.

Its function is as follows. One of the primary rRNA binding proteins, it binds specifically to the 5'-end of 16S ribosomal RNA. The chain is Small ribosomal subunit protein uS17 from Acidithiobacillus ferrooxidans (strain ATCC 23270 / DSM 14882 / CIP 104768 / NCIMB 8455) (Ferrobacillus ferrooxidans (strain ATCC 23270)).